A 437-amino-acid polypeptide reads, in one-letter code: 3-phosphoshikimate 1-carboxyvinyltransferase (437 aa).

Lys-22, Ser-23, and Arg-27 together coordinate 3-phosphoshikimate. A phosphoenolpyruvate-binding site is contributed by Lys-22. The phosphoenolpyruvate site is built by Gly-96 and Arg-125. 3-phosphoshikimate-binding residues include Ser-170, Gln-172, Asp-323, and Lys-350. Residue Gln-172 participates in phosphoenolpyruvate binding. The active-site Proton acceptor is the Asp-323. Positions 354 and 396 each coordinate phosphoenolpyruvate.

This sequence belongs to the EPSP synthase family. As to quaternary structure, monomer.

Its subcellular location is the cytoplasm. The enzyme catalyses 3-phosphoshikimate + phosphoenolpyruvate = 5-O-(1-carboxyvinyl)-3-phosphoshikimate + phosphate. The protein operates within metabolic intermediate biosynthesis; chorismate biosynthesis; chorismate from D-erythrose 4-phosphate and phosphoenolpyruvate: step 6/7. Functionally, catalyzes the transfer of the enolpyruvyl moiety of phosphoenolpyruvate (PEP) to the 5-hydroxyl of shikimate-3-phosphate (S3P) to produce enolpyruvyl shikimate-3-phosphate and inorganic phosphate. The protein is 3-phosphoshikimate 1-carboxyvinyltransferase of Synechococcus sp. (strain RCC307).